Reading from the N-terminus, the 666-residue chain is Calcium/calmodulin-dependent protein kinase type II subunit beta (666 aa).

One can recognise a Protein kinase domain in the interval 14–272; the sequence is YQLYEDIGKG…AHEALKHPWV (259 aa). The residue at position 17 (Tyr-17) is a Phosphotyrosine. Residues 20–28 and Lys-43 each bind ATP; that span reads IGKGAFSVV. Asp-136 functions as the Proton acceptor in the catalytic mechanism. Positions 283–292 are autoinhibitory domain; it reads HRQETVECLK. A Phosphothreonine; by autocatalysis modification is found at Thr-287. Positions 291 to 301 are calmodulin-binding; it reads LKKFNARRKLK. Phosphothreonine; by autocatalysis occurs at positions 306 and 307. Residues 349-534 are disordered; sequence ADGVKPQTNS…IPGPLPTPSR (186 aa). Residues 354–369 show a composition bias toward polar residues; the sequence is PQTNSTKNSAAATSPK. Phosphoserine occurs at positions 367, 394, and 397. Thr-400 and Thr-401 each carry phosphothreonine. Residues 432 to 447 show a composition bias toward pro residues; that stretch reads LPCPSPAPFSPLPAPS. Residues 479-491 show a composition bias toward low complexity; sequence SPALLGPLSSPSP. Pro residues predominate over residues 514–531; it reads PVGPPPCPSPTIPGPLPT.

It belongs to the protein kinase superfamily. CAMK Ser/Thr protein kinase family. CaMK subfamily. CAMK2 is composed of 4 different chains: alpha (CAMK2A), beta (CAMK2B), gamma (CAMK2G), and delta (CAMK2D). The different isoforms assemble into homo- or heteromultimeric holoenzymes composed of 12 subunits with two hexameric rings stacked one on top of the other. Interacts with SYNGAP1 and CAMK2N2. Interacts with MPDZ. Interacts with FOXO3. Interacts (when in a kinase inactive state not associated with calmodulin) with ARC; leading to target ARC to inactive synapses. Interacts with CAMK2N1; this interaction requires CAMK2B activation by Ca(2+). In terms of processing, autophosphorylation of Thr-287 following activation by Ca(2+)/calmodulin. Phosphorylation of Thr-287 locks the kinase into an activated state. Widely expressed. Expressed in adult and fetal brain. Expression is slightly lower in fetal brain. Expressed in skeletal muscle.

The protein resides in the cytoplasm. Its subcellular location is the cytoskeleton. It is found in the microtubule organizing center. It localises to the centrosome. The protein localises to the sarcoplasmic reticulum membrane. The protein resides in the synapse. The enzyme catalyses L-seryl-[protein] + ATP = O-phospho-L-seryl-[protein] + ADP + H(+). It carries out the reaction L-threonyl-[protein] + ATP = O-phospho-L-threonyl-[protein] + ADP + H(+). Its activity is regulated as follows. Activated by Ca(2+)/calmodulin. Binding of calmodulin results in conformational change that relieves intrasteric autoinhibition and allows autophosphorylation of Thr-287 which turns the kinase in a constitutively active form and confers to the kinase a Ca(2+)-independent activity. Functionally, calcium/calmodulin-dependent protein kinase that functions autonomously after Ca(2+)/calmodulin-binding and autophosphorylation, and is involved in dendritic spine and synapse formation, neuronal plasticity and regulation of sarcoplasmic reticulum Ca(2+) transport in skeletal muscle. In neurons, plays an essential structural role in the reorganization of the actin cytoskeleton during plasticity by binding and bundling actin filaments in a kinase-independent manner. This structural function is required for correct targeting of CaMK2A, which acts downstream of NMDAR to promote dendritic spine and synapse formation and maintain synaptic plasticity which enables long-term potentiation (LTP) and hippocampus-dependent learning. In developing hippocampal neurons, promotes arborization of the dendritic tree and in mature neurons, promotes dendritic remodeling. Also regulates the migration of developing neurons. Participates in the modulation of skeletal muscle function in response to exercise. In slow-twitch muscles, is involved in regulation of sarcoplasmic reticulum (SR) Ca(2+) transport and in fast-twitch muscle participates in the control of Ca(2+) release from the SR through phosphorylation of triadin, a ryanodine receptor-coupling factor, and phospholamban (PLN/PLB), an endogenous inhibitor of SERCA2A/ATP2A2. In response to interferon-gamma (IFN-gamma) stimulation, catalyzes phosphorylation of STAT1, stimulating the JAK-STAT signaling pathway. Phosphorylates reticulophagy regulator RETREG1 at 'Ser-151' under endoplasmic reticulum stress conditions which enhances RETREG1 oligomerization and its membrane scission and reticulophagy activity. This is Calcium/calmodulin-dependent protein kinase type II subunit beta (CAMK2B) from Homo sapiens (Human).